We begin with the raw amino-acid sequence, 188 residues long: Proline-rich protein 3 (188 aa).

The segment at 1 to 157 is disordered; the sequence is MPKRKKQNQH…DPQVMEDKSD (157 aa). Composition is skewed to pro residues over residues 35-46 and 69-82; these read IGPPSLLGPPPM and LIPP…PPWG. Positions 83–96 are enriched in low complexity; it reads RGPIRRGLGPRSSP. Basic and acidic residues predominate over residues 145–157; the sequence is PKDDPQVMEDKSD. The C3H1-type zinc-finger motif lies at 155–183; sequence KSDRPVCRHFAKKGHCRYEDLCAFYHPGV.

In Pan troglodytes (Chimpanzee), this protein is Proline-rich protein 3 (PRR3).